Consider the following 468-residue polypeptide: Putative magnesium transporter MRS2-G (468 aa).

Disordered regions lie at residues 1 to 76 (MGRR…AGKV) and 182 to 205 (NGQP…VPRL). Composition is skewed to low complexity over residues 14–23 (ASNASTSSST) and 31–45 (RLPS…SSPS). Residues 46-67 (PASPSPPPPSASHPAPPSPPLA) are compositionally biased toward pro residues. Residues 187–197 (GDDHGEKHDDS) show a composition bias toward basic and acidic residues. Helical transmembrane passes span 402 to 422 (LTLT…GAFA) and 437 to 457 (FFWP…IVLL).

This sequence belongs to the CorA metal ion transporter (MIT) (TC 1.A.35.5) family.

It is found in the membrane. Functionally, putative magnesium transporter. The sequence is that of Putative magnesium transporter MRS2-G (MRS2-G) from Oryza sativa subsp. indica (Rice).